The primary structure comprises 236 residues: tRNA (guanine-N(7)-)-methyltransferase (236 aa).

Residues Asp-35, Glu-60, Asn-87, and Asp-113 each contribute to the S-adenosyl-L-methionine site. The active site involves Asp-113. Lys-117 and Asp-149 together coordinate substrate.

This sequence belongs to the class I-like SAM-binding methyltransferase superfamily. TrmB family.

The enzyme catalyses guanosine(46) in tRNA + S-adenosyl-L-methionine = N(7)-methylguanosine(46) in tRNA + S-adenosyl-L-homocysteine. The protein operates within tRNA modification; N(7)-methylguanine-tRNA biosynthesis. Its function is as follows. Catalyzes the formation of N(7)-methylguanine at position 46 (m7G46) in tRNA. The polypeptide is tRNA (guanine-N(7)-)-methyltransferase (Prochlorococcus marinus (strain MIT 9313)).